Consider the following 400-residue polypeptide: Formate-dependent phosphoribosylglycinamide formyltransferase (400 aa).

N(1)-(5-phospho-beta-D-ribosyl)glycinamide contacts are provided by residues Glu22–Leu23 and Glu82. Residues Arg114, Lys155, Ser160 to Gln165, Glu195 to Val198, and Glu203 contribute to the ATP site. The ATP-grasp domain maps to Arg119–Leu308. Mg(2+) contacts are provided by Glu267 and Glu279. N(1)-(5-phospho-beta-D-ribosyl)glycinamide-binding positions include Asp286, Lys356, and Arg363–Arg364.

It belongs to the PurK/PurT family. Homodimer.

The enzyme catalyses N(1)-(5-phospho-beta-D-ribosyl)glycinamide + formate + ATP = N(2)-formyl-N(1)-(5-phospho-beta-D-ribosyl)glycinamide + ADP + phosphate + H(+). Its pathway is purine metabolism; IMP biosynthesis via de novo pathway; N(2)-formyl-N(1)-(5-phospho-D-ribosyl)glycinamide from N(1)-(5-phospho-D-ribosyl)glycinamide (formate route): step 1/1. Its function is as follows. Involved in the de novo purine biosynthesis. Catalyzes the transfer of formate to 5-phospho-ribosyl-glycinamide (GAR), producing 5-phospho-ribosyl-N-formylglycinamide (FGAR). Formate is provided by PurU via hydrolysis of 10-formyl-tetrahydrofolate. This is Formate-dependent phosphoribosylglycinamide formyltransferase from Hahella chejuensis (strain KCTC 2396).